Reading from the N-terminus, the 430-residue chain is C-terminal-binding protein 1 (430 aa).

The interval 1–59 (MSGVRPPIMNGPMHPRPLVALLDGRDCTVEMPILKDVATVAFCDAQSTQEIHEKVLNEA) is interaction with GLIS2 1. NAD(+) contacts are provided by residues S89, 169–174 (IGLGRV), D193, 226–232 (CGLNEHN), 253–255 (TAR), and D279. R255 is a catalytic residue. Residues 277–349 (ALDVHESEPF…VNKDHLTAAT (73 aa)) form an interaction with GLIS2 2 region. E284 is an active-site residue. S289 is subject to Phosphoserine. Catalysis depends on H304, which acts as the Proton donor. The disordered stretch occupies residues 398 to 430 (SHGLPPVAHPPHAPSPGQTVKPEADRDHTTDQL). Phosphoserine is present on S412. K418 is covalently cross-linked (Glycyl lysine isopeptide (Lys-Gly) (interchain with G-Cter in SUMO)). Residues 419–430 (PEADRDHTTDQL) are compositionally biased toward basic and acidic residues.

It belongs to the D-isomer specific 2-hydroxyacid dehydrogenase family. Homo- or heterodimer. Heterodimer with CTBP2. Interacts with ELK3 (via its PXDLS motif). Interacts with RBBP8 (via its PXDLS motif); the interaction is disrupted by binding to adenovirus E1A. Interacts with PNN, MECOM and ZFHX1B. Interacts with ZNF366 (via PXDLS motif). Interaction with SATB1 (non-acetylated form); the interaction stabilizes its attachment to DNA and promotes transcription repression. Interacts with PRDM16; the interaction represses white adipose tissue (WAT)-specific genes expression. Interacts with GLIS2, HIPK2, FOXP1, FOXP2, HDAC4, HDAC5, HDAC9, NRIP1 and WIZ. Interacts with ZNF217. Interacts with BCL6; the interaction is required for BCL6 transcriptional autoinhibition and inhibition of some BCL6 target genes. Interacts with IKZF4. Interacts with MCRIP1 (unphosphorylated form, via the PXDLS motif); competitively inhibiting CTBP-ZEB1 interaction. Interacts with Bassoon/BSN; this interaction targets and anchors CTBP1 to presynapses. Interacts with SIMC1. NAD(+) is required as a cofactor. In terms of processing, the level of phosphorylation appears to be regulated during the cell cycle. Phosphorylation by HIPK2 on Ser-412 induces proteasomal degradation. Post-translationally, ADP-ribosylated; when cells are exposed to brefeldin A. Sumoylation on Lys-418 is promoted by the E3 SUMO-protein ligase CBX4.

It is found in the cytoplasm. Its subcellular location is the nucleus. The protein localises to the synapse. The protein resides in the synaptosome. Its function is as follows. Corepressor targeting diverse transcription regulators such as GLIS2 or BCL6. Has dehydrogenase activity. Involved in controlling the equilibrium between tubular and stacked structures in the Golgi complex. Functions in brown adipose tissue (BAT) differentiation. This Rattus norvegicus (Rat) protein is C-terminal-binding protein 1 (Ctbp1).